A 588-amino-acid polypeptide reads, in one-letter code: Sulfite reductase [NADPH] hemoprotein beta-component (588 aa).

Over residues 1–10 (MSDKKQKGLE) the composition is skewed to basic and acidic residues. A disordered region spans residues 1–20 (MSDKKQKGLEWQDNPLSDNE). 4 residues coordinate [4Fe-4S] cluster: Cys443, Cys449, Cys488, and Cys492. Cys492 contacts siroheme.

The protein belongs to the nitrite and sulfite reductase 4Fe-4S domain family. In terms of assembly, alpha(8)-beta(8). The alpha component is a flavoprotein, the beta component is a hemoprotein. Siroheme is required as a cofactor. Requires [4Fe-4S] cluster as cofactor.

It carries out the reaction hydrogen sulfide + 3 NADP(+) + 3 H2O = sulfite + 3 NADPH + 4 H(+). It participates in sulfur metabolism; hydrogen sulfide biosynthesis; hydrogen sulfide from sulfite (NADPH route): step 1/1. Component of the sulfite reductase complex that catalyzes the 6-electron reduction of sulfite to sulfide. This is one of several activities required for the biosynthesis of L-cysteine from sulfate. This chain is Sulfite reductase [NADPH] hemoprotein beta-component, found in Mannheimia succiniciproducens (strain KCTC 0769BP / MBEL55E).